We begin with the raw amino-acid sequence, 361 residues long: Putative F-box protein At3g25460 (361 aa).

Residues 1–45 (MMMPELPEDLLVEILCRVPATSLKRLRSTCKLWNHLYNDKRFKSK) enclose the F-box domain.

The polypeptide is Putative F-box protein At3g25460 (Arabidopsis thaliana (Mouse-ear cress)).